The sequence spans 71 residues: Small ribosomal subunit protein bS21 (71 aa).

The segment at 47 to 71 (RENATRAKRHAKRVARENARNTRLY) is disordered. Residues 60 to 71 (VARENARNTRLY) show a composition bias toward basic and acidic residues.

Belongs to the bacterial ribosomal protein bS21 family.

The sequence is that of Small ribosomal subunit protein bS21 from Actinobacillus succinogenes (strain ATCC 55618 / DSM 22257 / CCUG 43843 / 130Z).